The chain runs to 1055 residues: MDS1 and EVI1 complex locus protein EVI1-A (1055 aa).

3 consecutive C2H2-type zinc fingers follow at residues Tyr-21–His-48, His-75–His-97, and Tyr-103–His-125. A C2H2-type 4; degenerate zinc finger spans residues Tyr-131–His-155. 2 C2H2-type zinc fingers span residues His-161–His-183 and Phe-189–His-211. A C2H2-type 7; atypical zinc finger spans residues Ile-218–Cys-240. 3 disordered regions span residues Pro-324 to Pro-345, Phe-372 to Asp-423, and Val-531 to Pro-621. Residues Glu-332–Pro-345 are compositionally biased toward polar residues. The span at Arg-381–Ser-392 shows a compositional bias: basic and acidic residues. The segment covering Ser-399–Asp-413 has biased composition (polar residues). Residues Lys-422–Lys-435 carry the Nuclear localization signal motif. The segment covering Val-531–Ala-566 has biased composition (basic and acidic residues). The short motif at Pro-554–Thr-558 is the CTBP-binding motif 1 element. Residues Asn-569–Asp-583 show a composition bias toward polar residues. The CTBP-binding motif 2 motif lies at Pro-585–Ser-589. The segment covering Gly-591–Gln-601 has biased composition (polar residues). Positions Thr-602 to Pro-621 are enriched in basic and acidic residues. 3 C2H2-type zinc fingers span residues Tyr-734–His-756, Tyr-762–His-785, and Phe-791–His-813. Disordered stretches follow at residues His-813–Leu-837 and Ser-922–Lys-957. The span at Gly-816–His-827 shows a compositional bias: polar residues. The segment covering Asp-944–Glu-954 has biased composition (acidic residues).

As to quaternary structure, homooligomer. Interacts with ctbp. In terms of tissue distribution, expressed dynamically during embryonic development; in the developing pronephros, specific areas of the brain (forebrain, midbrain and hindbrain), and in the majority of the visceral arch, and head mesenchyme derived from neural crest cells. Within the pronephros, expressed in the ventroposterior region of the pronephros anlagen from stage 20 (and is absent from the splanchnic layer that forms the glomus), then expression becomes restricted to the distal tubule and duct by the tadpole stage. In adults, expressed in various tissues including kidney, lung, testis, spleen and stomach.

It localises to the nucleus. Its subcellular location is the nucleus speckle. In terms of biological role, transcriptional repressor during pronephros development. Plays a role in regionalization of the pronephros; may promote formation of the distal tubule and duct over formation of the glomus and proximal tubule. In Xenopus laevis (African clawed frog), this protein is MDS1 and EVI1 complex locus protein EVI1-A (mecom-a).